Reading from the N-terminus, the 523-residue chain is Calcium uptake protein 3, mitochondrial (523 aa).

Residues 1-6 constitute a mitochondrion transit peptide; that stretch reads MAALRR. One can recognise an EF-hand 1 domain in the interval 226–261; it reads PHAGFRIAFNMFDTDGNEMVDKKEFLVLQEIFRKKN. Residues aspartate 238, aspartate 240, asparagine 242, methionine 244, aspartate 246, and glutamate 249 each coordinate Ca(2+). The 36-residue stretch at 395–430 folds into the EF-hand 2; degenerate domain; sequence ENTSVFLENVRYSISEEKGITFDEFRSFFQFLNNLE. The EF-hand 3 domain maps to 464–499; that stretch reads SPHLVNTVFKIFDVDKDDQLSYKEFIGIMKDRLHRG. Residues aspartate 476, aspartate 478, aspartate 480, glutamine 482, and glutamate 487 each contribute to the Ca(2+) site.

This sequence belongs to the MICU1 family. MICU3 subfamily. As to quaternary structure, heterodimer; disulfide-linked; heterodimerizes with MICU1. Heterodimerizes with isoform 3 of MICU1 (MICU1.1) in skeletal muscle. Component of the uniplex complex, composed of MCU, EMRE/SMDT1, MICU1 and MICU3 in a 4:4:1:1 stoichiometry. In terms of tissue distribution, predominantly expressed in skeletal muscle and central nervous system.

Its subcellular location is the mitochondrion intermembrane space. The protein localises to the mitochondrion inner membrane. In terms of biological role, tissue-specific calcium sensor of the mitochondrial calcium uniporter (MCU) channel, which specifically regulates MCU channel activity in the central nervous system and skeletal muscle. Senses calcium level via its EF-hand domains: compared to MICU1 and MICU2, MICU3 has a higher affinity for calcium. MICU1 and MICU3 form a disulfide-linked heterodimer that stimulates and inhibits MCU activity, depending on the concentration of calcium. At low calcium levels, MICU1 occludes the pore of the MCU channel, preventing mitochondrial calcium uptake. At higher calcium levels, calcium-binding to MICU1 and MICU3 induces a conformational change that weakens MCU-MICU1 interactions and moves the MICU1-MICU3 heterodimer away from the pore, allowing calcium permeation through the MCU channel. The high calcium affinity of MICU3 lowers the calcium threshold necessary for calcium permeation through the MCU channel. The MICU1-MICU3 heterodimer promotes flexibility of neurotransmission in neuronal cells by enhancing mitochondrial calcium uptake in presynapses. It is also required to increase mitochondrial calcium uptake in skeletal muscle cells, thereby increasing ATP production. In Mus musculus (Mouse), this protein is Calcium uptake protein 3, mitochondrial.